Here is a 265-residue protein sequence, read N- to C-terminus: Transcriptional activator AggR (265 aa).

The 98-residue stretch at aspartate 164 to tyrosine 261 folds into the HTH araC/xylS-type domain. 2 consecutive DNA-binding regions (H-T-H motif) follow at residues alanine 181 to tyrosine 202 and isoleucine 228 to phenylalanine 251.

As to quaternary structure, homodimer.

Functionally, transcriptional activator of aggregative adherence fimbria I expression in enteroaggregative E.coli. In Escherichia coli, this protein is Transcriptional activator AggR (aggR).